A 192-amino-acid polypeptide reads, in one-letter code: MAPLGGAPRLVLLFSGKRKSGKDFVTEALQSRLGADVCAVLRLSGPLKEQYAQEHGLNFQRLLDTSTYKEAFRKDMIRWGEEKRQADPGFFCRKIVEGISQPIWLVSDTRRVSDIQWFREAYGAVTQTVRVVALEQSRQQRGWVFTPGVDDAESECGLDNFGDFDWVIENHGVEQRLEEQLENLIEFIRSRL.

ATP is bound by residues lysine 17 to aspartate 23 and arginine 141. A substrate-binding site is contributed by asparagine 170. The ATP site is built by histidine 171, arginine 176, and glutamine 180.

In terms of assembly, monomer. As to expression, heart, liver, skeletal muscle, kidney, and pancreas. Lower level in brain, placenta and lung.

It is found in the cytoplasm. The protein resides in the cytosol. It catalyses the reaction (R)-5-phosphomevalonate + ATP = (R)-5-diphosphomevalonate + ADP. It functions in the pathway isoprenoid biosynthesis; isopentenyl diphosphate biosynthesis via mevalonate pathway; isopentenyl diphosphate from (R)-mevalonate: step 2/3. Catalyzes the reversible ATP-dependent phosphorylation of mevalonate 5-phosphate to produce mevalonate diphosphate and ADP, a key step in the mevalonic acid mediated biosynthesis of isopentenyl diphosphate and other polyisoprenoid metabolites. The polypeptide is Phosphomevalonate kinase (PMVK) (Homo sapiens (Human)).